The sequence spans 401 residues: CinA-like protein (401 aa).

It belongs to the CinA family.

This chain is CinA-like protein, found in Thermosipho melanesiensis (strain DSM 12029 / CIP 104789 / BI429).